Reading from the N-terminus, the 392-residue chain is 23S rRNA (uracil(747)-C(5))-methyltransferase RlmC (392 aa).

Cysteine 4, cysteine 12, cysteine 15, and cysteine 93 together coordinate [4Fe-4S] cluster. Residues glutamine 218, phenylalanine 247, glutamate 275, and asparagine 321 each contribute to the S-adenosyl-L-methionine site. Cysteine 348 acts as the Nucleophile in catalysis.

The protein belongs to the class I-like SAM-binding methyltransferase superfamily. RNA M5U methyltransferase family. RlmC subfamily.

The enzyme catalyses uridine(747) in 23S rRNA + S-adenosyl-L-methionine = 5-methyluridine(747) in 23S rRNA + S-adenosyl-L-homocysteine + H(+). Its function is as follows. Catalyzes the formation of 5-methyl-uridine at position 747 (m5U747) in 23S rRNA. The protein is 23S rRNA (uracil(747)-C(5))-methyltransferase RlmC of Haemophilus influenzae (strain PittEE).